Here is a 365-residue protein sequence, read N- to C-terminus: Ferrochelatase (365 aa).

Residues H211 and E292 each contribute to the Fe cation site.

Belongs to the ferrochelatase family.

Its subcellular location is the cytoplasm. The catalysed reaction is heme b + 2 H(+) = protoporphyrin IX + Fe(2+). The protein operates within porphyrin-containing compound metabolism; protoheme biosynthesis; protoheme from protoporphyrin-IX: step 1/1. Catalyzes the ferrous insertion into protoporphyrin IX. This is Ferrochelatase from Aromatoleum aromaticum (strain DSM 19018 / LMG 30748 / EbN1) (Azoarcus sp. (strain EbN1)).